Reading from the N-terminus, the 276-residue chain is Large ribosomal subunit protein uL2 (276 aa).

Residues 224–276 (VMNPVDHPHGGGEGKAPIGRKSPMTPWGKPTLGYKTRKKKNKSDKFIIRRRKK) form a disordered region. Over residues 258 to 276 (KTRKKKNKSDKFIIRRRKK) the composition is skewed to basic residues.

The protein belongs to the universal ribosomal protein uL2 family. Part of the 50S ribosomal subunit. Forms a bridge to the 30S subunit in the 70S ribosome.

In terms of biological role, one of the primary rRNA binding proteins. Required for association of the 30S and 50S subunits to form the 70S ribosome, for tRNA binding and peptide bond formation. It has been suggested to have peptidyltransferase activity; this is somewhat controversial. Makes several contacts with the 16S rRNA in the 70S ribosome. This is Large ribosomal subunit protein uL2 from Geobacillus kaustophilus (strain HTA426).